A 212-amino-acid polypeptide reads, in one-letter code: ATP synthase subunit 5, mitochondrial (212 aa).

The N-terminal 17 residues, 1-17, are a transit peptide targeting the mitochondrion; it reads MFNRVFTRSFASSLRAA.

The protein belongs to the ATPase delta chain family. As to quaternary structure, F-type ATPases have 2 components, CF(1) - the catalytic core - and CF(0) - the membrane proton channel. CF(1) has five subunits: alpha(3), beta(3), gamma(1), delta(1), epsilon(1). CF(0) has three main subunits: a, b and c.

The protein resides in the mitochondrion. It is found in the mitochondrion inner membrane. Mitochondrial membrane ATP synthase (F(1)F(0) ATP synthase or Complex V) produces ATP from ADP in the presence of a proton gradient across the membrane which is generated by electron transport complexes of the respiratory chain. F-type ATPases consist of two structural domains, F(1) - containing the extramembraneous catalytic core and F(0) - containing the membrane proton channel, linked together by a central stalk and a peripheral stalk. During catalysis, ATP synthesis in the catalytic domain of F(1) is coupled via a rotary mechanism of the central stalk subunits to proton translocation. Part of the complex F(0) domain and the peripheric stalk, which acts as a stator to hold the catalytic alpha(3)beta(3) subcomplex and subunit a/ATP6 static relative to the rotary elements. This is ATP synthase subunit 5, mitochondrial (ATP5) from Saccharomyces cerevisiae (strain ATCC 204508 / S288c) (Baker's yeast).